The following is a 581-amino-acid chain: Threonine--tRNA ligase (581 aa).

Residues 185 to 478 are catalytic; the sequence is DHRKLGKELD…LIEHYGGAFP (294 aa). Positions 278, 329, and 455 each coordinate Zn(2+).

It belongs to the class-II aminoacyl-tRNA synthetase family. As to quaternary structure, homodimer. Zn(2+) is required as a cofactor.

Its subcellular location is the cytoplasm. It carries out the reaction tRNA(Thr) + L-threonine + ATP = L-threonyl-tRNA(Thr) + AMP + diphosphate + H(+). Functionally, catalyzes the attachment of threonine to tRNA(Thr) in a two-step reaction: L-threonine is first activated by ATP to form Thr-AMP and then transferred to the acceptor end of tRNA(Thr). Also edits incorrectly charged L-seryl-tRNA(Thr). In Borreliella afzelii (strain PKo) (Borrelia afzelii), this protein is Threonine--tRNA ligase.